Here is a 208-residue protein sequence, read N- to C-terminus: Segregation and condensation protein B (208 aa).

This sequence belongs to the ScpB family. As to quaternary structure, homodimer. Homodimerization may be required to stabilize the binding of ScpA to the Smc head domains. Component of a cohesin-like complex composed of ScpA, ScpB and the Smc homodimer, in which ScpA and ScpB bind to the head domain of Smc. The presence of the three proteins is required for the association of the complex with DNA.

The protein resides in the cytoplasm. In terms of biological role, participates in chromosomal partition during cell division. May act via the formation of a condensin-like complex containing Smc and ScpA that pull DNA away from mid-cell into both cell halves. In Mycoplasma pneumoniae (strain ATCC 29342 / M129 / Subtype 1) (Mycoplasmoides pneumoniae), this protein is Segregation and condensation protein B.